A 219-amino-acid polypeptide reads, in one-letter code: Peptide methionine sulfoxide reductase MsrA (219 aa).

Residues 1–20 (MGLFRSPRQNLPTAADALPG) form a disordered region. Cys55 is an active-site residue.

The protein belongs to the MsrA Met sulfoxide reductase family.

The catalysed reaction is L-methionyl-[protein] + [thioredoxin]-disulfide + H2O = L-methionyl-(S)-S-oxide-[protein] + [thioredoxin]-dithiol. It carries out the reaction [thioredoxin]-disulfide + L-methionine + H2O = L-methionine (S)-S-oxide + [thioredoxin]-dithiol. Its function is as follows. Has an important function as a repair enzyme for proteins that have been inactivated by oxidation. Catalyzes the reversible oxidation-reduction of methionine sulfoxide in proteins to methionine. This is Peptide methionine sulfoxide reductase MsrA from Rhodospirillum centenum (strain ATCC 51521 / SW).